Reading from the N-terminus, the 164-residue chain is OV-17 antigen (164 aa).

The signal sequence occupies residues 1 to 16 (MKFVILLTIGLLVVAA). The segment at 24-43 (QQQQQQQQQRDEREIPPFLE) is disordered.

The protein belongs to the SXP/RAL-2 family. As to expression, high levels in the hypodermal layer of the adult female.

This Onchocerca volvulus protein is OV-17 antigen (OV17).